Consider the following 479-residue polypeptide: FAD-dependent monooxygenase cdmI (479 aa).

3 residues coordinate FAD: E43, G57, and R116. Residues N156 and N198 are each glycosylated (N-linked (GlcNAc...) asparagine). D315 and A328 together coordinate FAD. The chain crosses the membrane as a helical span at residues 453–473 (PFILAVLAGLGFLLTMFKQQW).

It belongs to the paxM FAD-dependent monooxygenase family. Requires FAD as cofactor.

The protein localises to the membrane. The catalysed reaction is verruculide C + AH2 + O2 = verruculide C epoxide + A + H2O. Its pathway is secondary metabolite biosynthesis; terpenoid biosynthesis. Its function is as follows. FAD-dependent monooxygenase; part of the gene cluster that mediates the biosynthesis of chrodrimanin B, a meroterpenoid that acts as a potent blocker of insect GABA-gated chloride channels. The first step of the pathway is the biosynthesis of 6-hydroxymellein by the polyketide synthase cdmE. The prenyltransferase cdmH acts as a 6-hydroxymellein 5-farnesyltransferase and produces the hydrophobic metabolite verruculide C. The FAD-dependent monooxygenase cdmI further converts verruculide C into verruculide B. The terpene cyclase cdmG then produced the pentacyclic molecule 3-hydroxypentacecilide A, the backbone structure of chrodrimanin B, via folding the farnesyl moiety of the substrate into the chair-boat conformation. The short-chain dehydrogenase/reductase cdmF functions as the 3-OH dehydrogenase that oxidizes the C-3 hydroxyl group of 3-hydroxypentacecilide A and produces chrodrimanin C, the dehydrogenated product of 3-hydroxypentacecilide A. The cytochrome P450 monooxygenase cdmJ then accepts both 3-hydroxypentacecilide A and chrodrimanin C and functions as a C-7-beta-hydroxylase to produce respectively chrodrimanin H and chrodrimanin F. The dioxygenase cdmA accepts chrodrimanin H to afford chrodrimanin E, which is further transformed to chrodrimanin A by the dioxygenase cdmD. CdmA can also accept chrodrimanin C as substrate to convert it into verruculide A, which is further converted into chrodrimanin T by cdmD. The last step of the biosynthesis is proposed to be performed by the acetyltransferase cdmC which acetylates chrodrimanin A to yield chrodrimanin B. The pathway may also lead to the production of additional shunt products, including chrodrimanins T and U. This is FAD-dependent monooxygenase cdmI from Talaromyces verruculosus (Penicillium verruculosum).